Reading from the N-terminus, the 502-residue chain is Glycerol kinase (502 aa).

An ADP-binding site is contributed by Thr-14. Residues Thr-14, Thr-15, and Ser-16 each coordinate ATP. Position 14 (Thr-14) interacts with sn-glycerol 3-phosphate. ADP is bound at residue Arg-18. Sn-glycerol 3-phosphate is bound by residues Arg-84, Glu-85, and Tyr-136. Residues Arg-84, Glu-85, and Tyr-136 each coordinate glycerol. A Phosphohistidine; by HPr modification is found at His-232. Position 246 (Asp-246) interacts with sn-glycerol 3-phosphate. 2 residues coordinate glycerol: Asp-246 and Gln-247. ADP contacts are provided by Thr-268 and Gly-311. Thr-268, Gly-311, Gln-315, and Gly-412 together coordinate ATP. ADP contacts are provided by Gly-412 and Asn-416.

The protein belongs to the FGGY kinase family. Homotetramer and homodimer (in equilibrium). Post-translationally, the phosphoenolpyruvate-dependent sugar phosphotransferase system (PTS), including enzyme I, and histidine-containing protein (HPr) are required for the phosphorylation, which leads to the activation of the enzyme.

It carries out the reaction glycerol + ATP = sn-glycerol 3-phosphate + ADP + H(+). It functions in the pathway polyol metabolism; glycerol degradation via glycerol kinase pathway; sn-glycerol 3-phosphate from glycerol: step 1/1. Its activity is regulated as follows. Activated by phosphorylation and inhibited by fructose 1,6-bisphosphate (FBP). Key enzyme in the regulation of glycerol uptake and metabolism. Catalyzes the phosphorylation of glycerol to yield sn-glycerol 3-phosphate. The chain is Glycerol kinase from Streptococcus pneumoniae (strain P1031).